The chain runs to 451 residues: Glutamyl-tRNA(Gln) amidotransferase subunit D (451 aa).

The segment at 78–97 is disordered; the sequence is PREAPTPGEEEGSQEDFGQP. The Asparaginase/glutaminase domain maps to 99-432; it reads PRVFFVGTGG…EEIQRLFTAN (334 aa). Active-site residues include Thr109, Thr187, Asp188, and Lys266.

It belongs to the asparaginase 1 family. GatD subfamily. In terms of assembly, heterodimer of GatD and GatE.

The catalysed reaction is L-glutamyl-tRNA(Gln) + L-glutamine + ATP + H2O = L-glutaminyl-tRNA(Gln) + L-glutamate + ADP + phosphate + H(+). Its function is as follows. Allows the formation of correctly charged Gln-tRNA(Gln) through the transamidation of misacylated Glu-tRNA(Gln) in organisms which lack glutaminyl-tRNA synthetase. The reaction takes place in the presence of glutamine and ATP through an activated gamma-phospho-Glu-tRNA(Gln). The GatDE system is specific for glutamate and does not act on aspartate. The protein is Glutamyl-tRNA(Gln) amidotransferase subunit D of Thermofilum pendens (strain DSM 2475 / Hrk 5).